The sequence spans 132 residues: Small ribosomal subunit protein eS6 (132 aa).

Belongs to the eukaryotic ribosomal protein eS6 family.

This Methanosphaerula palustris (strain ATCC BAA-1556 / DSM 19958 / E1-9c) protein is Small ribosomal subunit protein eS6.